The chain runs to 606 residues: 4-hydroxy-3-methylbut-2-en-1-yl diphosphate synthase (flavodoxin) (606 aa).

[4Fe-4S] cluster is bound by residues C513, C516, C547, and E554.

The protein belongs to the IspG family. [4Fe-4S] cluster is required as a cofactor.

The catalysed reaction is (2E)-4-hydroxy-3-methylbut-2-enyl diphosphate + oxidized [flavodoxin] + H2O + 2 H(+) = 2-C-methyl-D-erythritol 2,4-cyclic diphosphate + reduced [flavodoxin]. It functions in the pathway isoprenoid biosynthesis; isopentenyl diphosphate biosynthesis via DXP pathway; isopentenyl diphosphate from 1-deoxy-D-xylulose 5-phosphate: step 5/6. Converts 2C-methyl-D-erythritol 2,4-cyclodiphosphate (ME-2,4cPP) into 1-hydroxy-2-methyl-2-(E)-butenyl 4-diphosphate. In Chlamydia abortus (strain DSM 27085 / S26/3) (Chlamydophila abortus), this protein is 4-hydroxy-3-methylbut-2-en-1-yl diphosphate synthase (flavodoxin).